A 330-amino-acid polypeptide reads, in one-letter code: tRNA N6-adenosine threonylcarbamoyltransferase (330 aa).

Fe cation contacts are provided by His-110 and His-114. Substrate-binding positions include 133 to 137 (LVSGG), Asp-166, Gly-179, and Asn-268. Asp-296 is a Fe cation binding site.

The protein belongs to the KAE1 / TsaD family. Requires Fe(2+) as cofactor.

The protein localises to the cytoplasm. The catalysed reaction is L-threonylcarbamoyladenylate + adenosine(37) in tRNA = N(6)-L-threonylcarbamoyladenosine(37) in tRNA + AMP + H(+). In terms of biological role, required for the formation of a threonylcarbamoyl group on adenosine at position 37 (t(6)A37) in tRNAs that read codons beginning with adenine. Is involved in the transfer of the threonylcarbamoyl moiety of threonylcarbamoyl-AMP (TC-AMP) to the N6 group of A37, together with TsaE and TsaB. TsaD likely plays a direct catalytic role in this reaction. The sequence is that of tRNA N6-adenosine threonylcarbamoyltransferase from Kosmotoga olearia (strain ATCC BAA-1733 / DSM 21960 / TBF 19.5.1).